The primary structure comprises 320 residues: GTP 3',8-cyclase (320 aa).

Residues 5–225 (QFGRKINYLR…IQLIKKDEKA (221 aa)) enclose the Radical SAM core domain. Arg14 is a binding site for GTP. [4Fe-4S] cluster-binding residues include Cys21 and Cys25. An S-adenosyl-L-methionine-binding site is contributed by Tyr27. Cys28 contacts [4Fe-4S] cluster. A GTP-binding site is contributed by Arg64. Gly68 is an S-adenosyl-L-methionine binding site. Thr95 is a binding site for GTP. Residue Ser119 coordinates S-adenosyl-L-methionine. Lys155 contributes to the GTP binding site. S-adenosyl-L-methionine is bound at residue Met189. The [4Fe-4S] cluster site is built by Cys248 and Cys251. 253–255 (RIR) lines the GTP pocket. [4Fe-4S] cluster is bound at residue Cys265.

This sequence belongs to the radical SAM superfamily. MoaA family. As to quaternary structure, monomer and homodimer. [4Fe-4S] cluster serves as cofactor.

The enzyme catalyses GTP + AH2 + S-adenosyl-L-methionine = (8S)-3',8-cyclo-7,8-dihydroguanosine 5'-triphosphate + 5'-deoxyadenosine + L-methionine + A + H(+). The protein operates within cofactor biosynthesis; molybdopterin biosynthesis. Functionally, catalyzes the cyclization of GTP to (8S)-3',8-cyclo-7,8-dihydroguanosine 5'-triphosphate. The chain is GTP 3',8-cyclase from Campylobacter jejuni subsp. jejuni serotype O:6 (strain 81116 / NCTC 11828).